Here is a 607-residue protein sequence, read N- to C-terminus: Guanine nucleotide-binding protein-like 1 (607 aa).

A compositionally biased stretch (basic residues) spans 1 to 14; sequence MPRKKPFSVKQKKK. Positions 1–81 are disordered; sequence MPRKKPFSVK…GPRGYDPNRY (81 aa). Residues 15-26 show a composition bias toward basic and acidic residues; sequence QLQDKRERKRGL. 3 positions are modified to phosphoserine: Ser32, Ser33, and Ser34. Phosphothreonine is present on residues Thr48 and Thr50. Phosphoserine is present on residues Ser51 and Ser68. Residues 178 to 418 form the CP-type G domain; the sequence is WRQLWRVLEM…LCDCPGLIFP (241 aa). 225 to 228 contributes to the GTP binding site; it reads NKVD. Ser324 bears the Phosphoserine mark. Residues 367 to 374 and 411 to 415 each bind GTP; these read GFPNVGKS and DCPGL. The disordered stretch occupies residues 547-607; sequence GPAGDEEEEE…PYALLGEDEC (61 aa). A compositionally biased stretch (acidic residues) spans 550–584; that stretch reads GDEEEEEEEELSSSCEEEGEEDRDADEEGEGDEDT. Phosphoserine occurs at positions 561, 562, and 563.

The protein belongs to the TRAFAC class YlqF/YawG GTPase family.

In terms of biological role, possible regulatory or functional link with the histocompatibility cluster. This is Guanine nucleotide-binding protein-like 1 (GNL1) from Macaca fascicularis (Crab-eating macaque).